Consider the following 100-residue polypeptide: SAGA-associated factor 11 (100 aa).

Residues phenylalanine 73–cysteine 94 form an SGF11-type zinc finger.

This sequence belongs to the SGF11 family. In terms of assembly, component of the 1.8 MDa SAGA transcription coactivator-HAT complex. SAGA is built of 5 distinct domains with specialized functions. Within the SAGA complex, SUS1, SGF11, SGF73 and UBP8 form an additional subcomplex of SAGA called the DUB module (deubiquitination module). Interacts directly with SGF73, SUS1 and UBP8.

The protein localises to the nucleus. Its function is as follows. Functions as a component of the transcription regulatory histone acetylation (HAT) complex SAGA. At the promoters, SAGA is required for recruitment of the basal transcription machinery. It influences RNA polymerase II transcriptional activity through different activities such as TBP interaction and promoter selectivity, interaction with transcription activators, and chromatin modification through histone acetylation and deubiquitination. SAGA acetylates nucleosomal histone H3 to some extent (to form H3K9ac, H3K14ac, H3K18ac and H3K23ac). SAGA interacts with DNA via upstream activating sequences (UASs). Involved in transcriptional regulation of a subset of SAGA-regulated genes. Within the SAGA complex, participates in a subcomplex, that specifically deubiquitinates histones H2B. The polypeptide is SAGA-associated factor 11 (Debaryomyces hansenii (strain ATCC 36239 / CBS 767 / BCRC 21394 / JCM 1990 / NBRC 0083 / IGC 2968) (Yeast)).